Here is an 860-residue protein sequence, read N- to C-terminus: MYMSTDEVRNAFLKFFESKGHQIVESSSLVPHNDPTLLFTNAGMNQFKDCFLGLEKRAYTRATTAQRCVRAGGKHNDLENVGFTARHHTFFEMLGNFSFGDYFKEDAISFAWEFLTDVLKLPADRLLVTVYETDDEAFDIWNKKVGVPADRIIRIGDKKGGKPYESDNFWQMGDTGPCGPCTEIFYDHGEHIWGGRPGTPEEDGDRFIEIWNNVFMQFNRHADGTMEPLPKPSVDTGMGIERISAIMQGVHSNYEIDVFQALIKAAAEVIGYEDLSNQSLRVIADHIRSCSFLIVDGVMPSNEGRGYVLRRIIRRAVRHGNKLGAQGAFFHKLVGVLADIMGTAGEELKRQQAVVEKVLRIEEENFGRTLERGMAILNEALDNLDGKVLDGETVFKLYDTYGFPADLTNDVAREREFAIDEEGFEKAMEEQRQRAREAGQFGTDYNAAIKVDTQTEFCGYVGTKGSSSVAAMFVEGNEVDSLSAGDKAIIVLGETPFYAESGGQCGDAGEIRTEAGVFRVEDTQKLGNAIAHHGVMAEGVLAKGDEVATIVDAERRAAISLNHSATHLLHAALRQVLGEHVTQKGSLVKAENLRFDFSHLEAVTAAELKEVERLVNAQIRRNHVIETNVMDIESAKKKGAMALFGEKYDDEVRVLSMGDFSTELCGGIHASNTGDIGLFKITSESGIAAGIRRIEAVTGEAALDAIEAQAAKYEEKLAESAQKAKTLEKELQKLKDKMAAAESANIMGKAVEVNGTKVLVAALEGADSKNLRTMVDDIKNQMGSGVVLLANVTDDKVGLIAGVTKDLVGKVKAGDLVKMVAEQVGGKGGGRPDMAQAGGTDVSALPEAIKTVQPWLEERL.

Positions 563, 567, 665, and 669 each coordinate Zn(2+).

Belongs to the class-II aminoacyl-tRNA synthetase family. The cofactor is Zn(2+).

Its subcellular location is the cytoplasm. The enzyme catalyses tRNA(Ala) + L-alanine + ATP = L-alanyl-tRNA(Ala) + AMP + diphosphate. In terms of biological role, catalyzes the attachment of alanine to tRNA(Ala) in a two-step reaction: alanine is first activated by ATP to form Ala-AMP and then transferred to the acceptor end of tRNA(Ala). Also edits incorrectly charged Ser-tRNA(Ala) and Gly-tRNA(Ala) via its editing domain. The sequence is that of Alanine--tRNA ligase from Vibrio parahaemolyticus serotype O3:K6 (strain RIMD 2210633).